We begin with the raw amino-acid sequence, 243 residues long: Small ribosomal subunit protein eS4 (243 aa).

The S4 RNA-binding domain occupies 43–105 (IPLLYIVRDY…TGEHYRVLPN (63 aa)).

It belongs to the eukaryotic ribosomal protein eS4 family.

This Pyrococcus abyssi (strain GE5 / Orsay) protein is Small ribosomal subunit protein eS4 (rps4e).